A 165-amino-acid chain; its full sequence is Large ribosomal subunit protein uL10 (165 aa).

Belongs to the universal ribosomal protein uL10 family. In terms of assembly, part of the ribosomal stalk of the 50S ribosomal subunit. The N-terminus interacts with L11 and the large rRNA to form the base of the stalk. The C-terminus forms an elongated spine to which L12 dimers bind in a sequential fashion forming a multimeric L10(L12)X complex.

Its function is as follows. Forms part of the ribosomal stalk, playing a central role in the interaction of the ribosome with GTP-bound translation factors. The protein is Large ribosomal subunit protein uL10 of Cronobacter sakazakii (strain ATCC BAA-894) (Enterobacter sakazakii).